The chain runs to 643 residues: Threonine--tRNA ligase (643 aa).

The 61-residue stretch at 1-61 (MPIITLPDGS…TEDSTLEIIT (61 aa)) folds into the TGS domain. The tract at residues 243 to 534 (DHRKIGKALD…ITEEYAGFFP (292 aa)) is catalytic. Residues cysteine 334, histidine 385, and histidine 511 each coordinate Zn(2+).

The protein belongs to the class-II aminoacyl-tRNA synthetase family. Homodimer. Zn(2+) serves as cofactor.

Its subcellular location is the cytoplasm. The catalysed reaction is tRNA(Thr) + L-threonine + ATP = L-threonyl-tRNA(Thr) + AMP + diphosphate + H(+). In terms of biological role, catalyzes the attachment of threonine to tRNA(Thr) in a two-step reaction: L-threonine is first activated by ATP to form Thr-AMP and then transferred to the acceptor end of tRNA(Thr). Also edits incorrectly charged L-seryl-tRNA(Thr). This chain is Threonine--tRNA ligase, found in Mannheimia succiniciproducens (strain KCTC 0769BP / MBEL55E).